A 659-amino-acid polypeptide reads, in one-letter code: WD repeat-containing protein 48 homolog (659 aa).

8 WD repeats span residues 27 to 66 (RHRN…SQEP), 73 to 112 (HHND…CMST), 115 to 154 (THRD…ALTA), 166 to 205 (GSKD…KIAK), 208 to 247 (GHAE…CVQT), 250 to 289 (VHSE…NSVL), 292 to 331 (EERA…KLSF), and 337 to 376 (KGGA…KVED). The interval 592–613 (ASTGNSNSSQNNSQSDANSEGS) is disordered. A compositionally biased stretch (low complexity) spans 596–610 (NSNSSQNNSQSDANS).

Belongs to the WD repeat WDR48 family. Catalytic component of the Usp12-46 deubiquitylase complex consisting of Usp12-46, Wdr20 and Uaf1; regulatory subunit that, together wtih Wdr20, stabilizes Usp12-46. The Usp12-46 deubiquitylase complex associates with arr/arrow; the interaction leads to deubiquitination and stabilization of arr/arrow.

Its function is as follows. Regulatory component of the Usp12-46 deubiquitylase complex. activates deubiquitination by increasing the catalytic turnover without increasing the affinity of deubiquitinating enzymes for the substrate. The complex deubiquitylates the wg/wingless-signaling receptor arr/arrow, which stabilizes the receptor and increases its concentration at the cell surface; this enhances the sensitivity of cells to wg/wingless-signal stimulation. This increases the amplitude and spatial range of the signaling response to the wg/wingless morphogen gradient, facilitating the precise concentration-dependent regulation of its target genes. Together with Wdr20 and Usp12-46 required for wg/wingless-mediated signaling in the wing imaginal disc and for wg/wingless-dependent regulation of intestinal stem cell proliferation. This chain is WD repeat-containing protein 48 homolog, found in Aedes aegypti (Yellowfever mosquito).